We begin with the raw amino-acid sequence, 206 residues long: Max dimerization protein 3 (206 aa).

Residues 8-25 are interaction with SIN3A and SIN3B; sequence IQVLLQAAEFLERREREA. Disordered stretches follow at residues 29–66 and 122–171; these read YASL…NELE and KLRS…QEDL. A bHLH domain is found at 57-109; sequence SGRSVHNELEKRRRAQLKRCLEQLRQQMPLGVDCTRYTTLSLLRRARVHIQKL. Positions 126–138 are enriched in low complexity; it reads KQQSLQQQLEQLQ. Positions 143 to 153 are enriched in basic and acidic residues; sequence ARERERLRADS.

As to quaternary structure, efficient DNA binding requires dimerization with another bHLH protein. Binds DNA as a heterodimer with MAX. Interacts with SIN3A AND SIN3B. Interacts with RNF17. In terms of tissue distribution, expressed only in the proliferating areas of the testis and thymus.

The protein resides in the nucleus. Functionally, transcriptional repressor. Binds with MAX to form a sequence-specific DNA-binding protein complex which recognizes the core sequence 5'-CAC[GA]TG-3'. Antagonizes MYC transcriptional activity by competing for MAX and suppresses MYC dependent cell transformation. The polypeptide is Max dimerization protein 3 (Mxd3) (Mus musculus (Mouse)).